Reading from the N-terminus, the 144-residue chain is Large ribosomal subunit protein uL11 (144 aa).

Belongs to the universal ribosomal protein uL11 family. Part of the ribosomal stalk of the 50S ribosomal subunit. Interacts with L10 and the large rRNA to form the base of the stalk. L10 forms an elongated spine to which L12 dimers bind in a sequential fashion forming a multimeric L10(L12)X complex. In terms of processing, one or more lysine residues are methylated.

In terms of biological role, forms part of the ribosomal stalk which helps the ribosome interact with GTP-bound translation factors. This chain is Large ribosomal subunit protein uL11, found in Deinococcus geothermalis (strain DSM 11300 / CIP 105573 / AG-3a).